A 189-amino-acid chain; its full sequence is 3-hydroxyanthranilate 3,4-dioxygenase (189 aa).

R46 is an O2 binding site. Positions 50, 56, and 94 each coordinate Fe cation. E56 contacts substrate. Substrate is bound by residues R98 and E109. The Fe cation site is built by C124, C127, C161, and C164.

This sequence belongs to the 3-HAO family. Homodimer. Fe(2+) serves as cofactor.

The enzyme catalyses 3-hydroxyanthranilate + O2 = (2Z,4Z)-2-amino-3-carboxymuconate 6-semialdehyde. Its pathway is cofactor biosynthesis; NAD(+) biosynthesis; quinolinate from L-kynurenine: step 3/3. Catalyzes the oxidative ring opening of 3-hydroxyanthranilate to 2-amino-3-carboxymuconate semialdehyde, which spontaneously cyclizes to quinolinate. The sequence is that of 3-hydroxyanthranilate 3,4-dioxygenase from Shewanella woodyi (strain ATCC 51908 / MS32).